Here is a 457-residue protein sequence, read N- to C-terminus: D(1B) dopamine receptor (457 aa).

At 1-41 the chain is on the extracellular side; it reads MYQPFQHLDSDQVASWQSPEMLMNKSVSRESQRRKELVAGQ. N24 carries an N-linked (GlcNAc...) asparagine glycan. Residues 42–67 traverse the membrane as a helical segment; it reads IVTGSLLLLLIFWTLFGNILVCTAVM. Topologically, residues 68 to 78 are cytoplasmic; that stretch reads RFRHLRSRVTN. A helical membrane pass occupies residues 79-105; that stretch reads IFIVSLAVSDLLVALLVMPWKAVAEVA. The Extracellular segment spans residues 106 to 114; sequence GHWPFGAFC. C114 and C199 are oxidised to a cystine. The chain crosses the membrane as a helical span at residues 115–137; that stretch reads DIWVAFDIMCSTASILNLCVISV. At 138 to 156 the chain is on the cytoplasmic side; sequence DRYWAISSPFRYERKMTQR. The chain crosses the membrane as a helical span at residues 157 to 181; sequence VALLMISTAWALSVLISFIPVQLSW. At 182–205 the chain is on the extracellular side; sequence HKSETEDHLLSNHSTGNCDSSLNR. Residues 206 to 231 form a helical membrane-spanning segment; sequence TYAISSSLISFYIPVAIMIVTYTRIY. Residues 232–282 lie on the Cytoplasmic side of the membrane; sequence RIAQIQIKRISTLERAAEHAQSCRSNRVDSCSRHHQTSLRTSIKKETKVLK. Residues 283 to 309 traverse the membrane as a helical segment; it reads TLSIIMGVFVCCWLPFFILNCMVPFCD. At 310 to 326 the chain is on the extracellular side; the sequence is RSPGHPQAGLPCVSETT. A helical transmembrane segment spans residues 327–351; sequence FDIFVWFGWANSSLNPIIYAFNADF. Residues 352–457 lie on the Cytoplasmic side of the membrane; it reads RKVFSSLLGC…ITPSMSNGIH (106 aa). The S-palmitoyl cysteine moiety is linked to residue C361.

Belongs to the G-protein coupled receptor 1 family. As to expression, brain and kidney.

The protein resides in the cell membrane. Dopamine receptor whose activity is mediated by G proteins which activate adenylyl cyclase. This chain is D(1B) dopamine receptor (drd5), found in Xenopus laevis (African clawed frog).